Consider the following 122-residue polypeptide: Large ribosomal subunit protein uL14 (122 aa).

This sequence belongs to the universal ribosomal protein uL14 family. Part of the 50S ribosomal subunit. Forms a cluster with proteins L3 and L19. In the 70S ribosome, L14 and L19 interact and together make contacts with the 16S rRNA in bridges B5 and B8.

Its function is as follows. Binds to 23S rRNA. Forms part of two intersubunit bridges in the 70S ribosome. This chain is Large ribosomal subunit protein uL14, found in Heliobacterium modesticaldum (strain ATCC 51547 / Ice1).